The primary structure comprises 502 residues: Glycerol kinase (502 aa).

T14 contributes to the ADP binding site. Residues T14, T15, and S16 each contribute to the ATP site. T14 contributes to the sn-glycerol 3-phosphate binding site. R18 serves as a coordination point for ADP. 4 residues coordinate sn-glycerol 3-phosphate: R84, E85, Y136, and D246. R84, E85, Y136, D246, and Q247 together coordinate glycerol. Residues T268 and G311 each contribute to the ADP site. ATP-binding residues include T268, G311, Q315, and G412. G412 and N416 together coordinate ADP.

The protein belongs to the FGGY kinase family. Homotetramer and homodimer (in equilibrium). Heterodimer with EIIA-Glc. Binds 1 zinc ion per glycerol kinase EIIA-Glc dimer. The zinc ion is important for dimerization.

The enzyme catalyses glycerol + ATP = sn-glycerol 3-phosphate + ADP + H(+). Its pathway is polyol metabolism; glycerol degradation via glycerol kinase pathway; sn-glycerol 3-phosphate from glycerol: step 1/1. Activity of this regulatory enzyme is affected by several metabolites. Allosterically and non-competitively inhibited by fructose 1,6-bisphosphate (FBP) and unphosphorylated phosphocarrier protein EIIA-Glc (III-Glc), an integral component of the bacterial phosphotransferase (PTS) system. Key enzyme in the regulation of glycerol uptake and metabolism. Catalyzes the phosphorylation of glycerol to yield sn-glycerol 3-phosphate. The polypeptide is Glycerol kinase (Escherichia coli (strain ATCC 8739 / DSM 1576 / NBRC 3972 / NCIMB 8545 / WDCM 00012 / Crooks)).